We begin with the raw amino-acid sequence, 618 residues long: Baculoviral IAP repeat-containing protein 2 (618 aa).

BIR repeat units follow at residues 46 to 113 (ELYR…CSFI), 184 to 250 (EEAR…CPFL), and 269 to 336 (HAAR…CEFL). Zn(2+) is bound by residues cysteine 306, cysteine 309, histidine 326, and cysteine 333. The 91-residue stretch at 453–543 (MASDDLSLIR…TLYKNLFVDK (91 aa)) folds into the CARD domain. The RING-type zinc finger occupies 571 to 606 (CKVCMDKEVSVVFIPCGHLVVCQECAPSLRKCPICR).

It belongs to the IAP family. In terms of assembly, interacts with DIABLO/SMAC and with PRSS25; these interactions inhibit apoptotic suppressor activity. Interacts with CASP9. Interacts (via BIR domains) with TRAF2; the interaction is required for IKBKE ubiquitination. Interacts with E2F1, RIPK1, RIPK2, RIPK3, RIPK4, BIRC5/survivin and USP19. HSP90AB1. Interacts with UBXN1. Interacts with GSK3B. Interacts with several death receptors, inclusing FAS, TNFRSF10A and TNFRSF10B. Recruited to TNFRSF10B in the absence of receptor stimulation. When TNFRSF10B is stimulated, further recruited to the receptor and cleaved by caspases. Proteolytic fragments remain associated with TNFRSF10B. Auto-ubiquitinated and degraded by the proteasome in apoptotic cells. In terms of processing, upon stimulation of death receptors, including TNFRSF10B, recruited to receptors and cleaved by caspases. Proteolytic fragments remain associated with the receptors. This cleavage presumably inactivates the protein. As to expression, present in many fetal and adult tissues. Mainly expressed in adult skeletal muscle, thymus, testis, ovary, and pancreas, low or absent in brain and peripheral blood leukocytes.

The protein localises to the cytoplasm. It localises to the nucleus. The enzyme catalyses S-ubiquitinyl-[E2 ubiquitin-conjugating enzyme]-L-cysteine + [acceptor protein]-L-lysine = [E2 ubiquitin-conjugating enzyme]-L-cysteine + N(6)-ubiquitinyl-[acceptor protein]-L-lysine.. The CARD domain inhibits the activation of E3 ubiquitin ligase activity by preventing RING domain dimerization and E2 ubiquitin donor binding and activation. The CARD domain-mediated autoinhibition of the E3 ubiquitin-protein ligase activity suppresses cell proliferation and migration. USP19 regulates the stability of BIRC2/c-IAP1 by preventing its ubiquitination. In terms of biological role, multi-functional protein which regulates not only caspases and apoptosis, but also modulates inflammatory signaling and immunity, mitogenic kinase signaling, and cell proliferation, as well as cell invasion and metastasis. Acts as an E3 ubiquitin-protein ligase regulating NF-kappa-B signaling and regulates both canonical and non-canonical NF-kappa-B signaling by acting in opposite directions: acts as a positive regulator of the canonical pathway and suppresses constitutive activation of non-canonical NF-kappa-B signaling. The target proteins for its E3 ubiquitin-protein ligase activity include: RIPK1, RIPK2, RIPK3, RIPK4, CASP3, CASP7, CASP8, TRAF2, DIABLO/SMAC, MAP3K14/NIK, MAP3K5/ASK1, IKBKG/NEMO, IKBKE and MXD1/MAD1. Can also function as an E3 ubiquitin-protein ligase of the NEDD8 conjugation pathway, targeting effector caspases for neddylation and inactivation. Acts as an important regulator of innate immune signaling via regulation of Toll-like receptors (TLRs), Nodlike receptors (NLRs) and RIG-I like receptors (RLRs), collectively referred to as pattern recognition receptors (PRRs). Protects cells from spontaneous formation of the ripoptosome, a large multi-protein complex that has the capability to kill cancer cells in a caspase-dependent and caspase-independent manner. Suppresses ripoptosome formation by ubiquitinating RIPK1 and CASP8. Can stimulate the transcriptional activity of E2F1. Plays a role in the modulation of the cell cycle. This Homo sapiens (Human) protein is Baculoviral IAP repeat-containing protein 2 (BIRC2).